We begin with the raw amino-acid sequence, 216 residues long: MISFIKGVLIEKDPTALLIDVNGIGYEVFVPMTTFYTLGDIDSQVSLYTHFVVREDAQQLYGFKSKVDKKVFQELIKVNGIGARTAIAILSGMDSKTLLHCIENKDYALLATVPGIGKKTAERLVVEIYDKLLKMANEIYAQTSGTTTTSQDSQAQQAPTSVVLANSIFNESVDALLALGYKQKDAEKMARSAMGDATTAAEVIRKALQGSIKSKG.

The segment at 1 to 64 is domain I; that stretch reads MISFIKGVLI…EDAQQLYGFK (64 aa). A domain II region spans residues 65-143; sequence SKVDKKVFQE…KMANEIYAQT (79 aa). A flexible linker region spans residues 144–163; it reads SGTTTTSQDSQAQQAPTSVV. The domain III stretch occupies residues 164 to 216; it reads LANSIFNESVDALLALGYKQKDAEKMARSAMGDATTAAEVIRKALQGSIKSKG.

This sequence belongs to the RuvA family. As to quaternary structure, homotetramer. Forms an RuvA(8)-RuvB(12)-Holliday junction (HJ) complex. HJ DNA is sandwiched between 2 RuvA tetramers; dsDNA enters through RuvA and exits via RuvB. An RuvB hexamer assembles on each DNA strand where it exits the tetramer. Each RuvB hexamer is contacted by two RuvA subunits (via domain III) on 2 adjacent RuvB subunits; this complex drives branch migration. In the full resolvosome a probable DNA-RuvA(4)-RuvB(12)-RuvC(2) complex forms which resolves the HJ.

It localises to the cytoplasm. Functionally, the RuvA-RuvB-RuvC complex processes Holliday junction (HJ) DNA during genetic recombination and DNA repair, while the RuvA-RuvB complex plays an important role in the rescue of blocked DNA replication forks via replication fork reversal (RFR). RuvA specifically binds to HJ cruciform DNA, conferring on it an open structure. The RuvB hexamer acts as an ATP-dependent pump, pulling dsDNA into and through the RuvAB complex. HJ branch migration allows RuvC to scan DNA until it finds its consensus sequence, where it cleaves and resolves the cruciform DNA. In Francisella tularensis subsp. holarctica (strain FTNF002-00 / FTA), this protein is Holliday junction branch migration complex subunit RuvA.